The following is a 332-amino-acid chain: Fructose-1,6-bisphosphatase class 1 (332 aa).

The Mg(2+) site is built by Glu-89, Asp-110, Leu-112, and Asp-113. Residues 113-116, Asn-206, Tyr-239, 257-259, and Lys-269 contribute to the substrate site; these read DGSS and YLY. Glu-275 contributes to the Mg(2+) binding site.

The protein belongs to the FBPase class 1 family. In terms of assembly, homotetramer. Mg(2+) is required as a cofactor.

It is found in the cytoplasm. It carries out the reaction beta-D-fructose 1,6-bisphosphate + H2O = beta-D-fructose 6-phosphate + phosphate. Its pathway is carbohydrate biosynthesis; gluconeogenesis. This chain is Fructose-1,6-bisphosphatase class 1, found in Salmonella typhi.